Consider the following 25-residue polypeptide: Chaperonin GroEL (25 aa).

Belongs to the chaperonin (HSP60) family. In terms of assembly, forms a cylinder of 14 subunits composed of two heptameric rings stacked back-to-back. Interacts with the co-chaperonin GroES.

Its subcellular location is the cytoplasm. The catalysed reaction is ATP + H2O + a folded polypeptide = ADP + phosphate + an unfolded polypeptide.. Its function is as follows. Together with its co-chaperonin GroES, plays an essential role in assisting protein folding. The GroEL-GroES system forms a nano-cage that allows encapsulation of the non-native substrate proteins and provides a physical environment optimized to promote and accelerate protein folding. In Delftia acidovorans (Pseudomonas acidovorans), this protein is Chaperonin GroEL.